A 719-amino-acid polypeptide reads, in one-letter code: Probable 1-deoxy-D-xylulose-5-phosphate synthase, chloroplastic (719 aa).

The transit peptide at M1 to Q57 directs the protein to the chloroplast. Thiamine diphosphate-binding positions include H145 and G186–S188. D217 contacts Mg(2+). Thiamine diphosphate is bound by residues G218–A219, N246, Y367, and E449. Residue N246 coordinates Mg(2+).

Belongs to the transketolase family. DXPS subfamily. As to quaternary structure, homodimer. Mg(2+) serves as cofactor. The cofactor is thiamine diphosphate.

It is found in the plastid. It localises to the chloroplast. It catalyses the reaction D-glyceraldehyde 3-phosphate + pyruvate + H(+) = 1-deoxy-D-xylulose 5-phosphate + CO2. It functions in the pathway metabolic intermediate biosynthesis; 1-deoxy-D-xylulose 5-phosphate biosynthesis; 1-deoxy-D-xylulose 5-phosphate from D-glyceraldehyde 3-phosphate and pyruvate: step 1/1. In terms of biological role, catalyzes the acyloin condensation reaction between C atoms 2 and 3 of pyruvate and glyceraldehyde 3-phosphate to yield 1-deoxy-D-xylulose-5-phosphate (DXP). The chain is Probable 1-deoxy-D-xylulose-5-phosphate synthase, chloroplastic (TKT2) from Capsicum annuum (Capsicum pepper).